A 57-amino-acid chain; its full sequence is uncharacterized protein (57 aa).

The chain crosses the membrane as a helical span at residues 12 to 34 (VIAVLSLFVFAVAVFFVGMALLT).

Its subcellular location is the membrane. This is an uncharacterized protein from Pasteurella multocida (strain Pm70).